Consider the following 514-residue polypeptide: Acetylcholine receptor subunit gamma (514 aa).

Positions 1–22 (MRCSDLLLLFLLALCVLPGISC) are cleaved as a signal peptide. Residues 23 to 241 (RNQEEKLLQD…VIFYLIIQRK (219 aa)) lie on the Extracellular side of the membrane. Cys150 and Cys164 form a disulfide bridge. Asn163 is a glycosylation site (N-linked (GlcNAc...) asparagine). Transmembrane regions (helical) follow at residues 242 to 266 (PLFYIINIIVPCVLISSMAVLVYFL), 275 to 293 (CTVSINVLLAQTVFLFLIA), and 309 to 330 (YLTFLMVVTVVIVVNAVIVLNV). The Cytoplasmic portion of the chain corresponds to 331-473 (SLRTPNTHSM…WILVGRVIDR (143 aa)). At Tyr386 the chain carries Phosphotyrosine; by Tyr-kinases. The chain crosses the membrane as a helical span at residues 474–494 (VCFFIMASLFVCGTIGIFLMA).

Belongs to the ligand-gated ion channel (TC 1.A.9) family. Acetylcholine receptor (TC 1.A.9.1) subfamily. Gamma/CHRNG sub-subfamily. As to quaternary structure, pentamer of two alpha chains, and one each of the beta, delta, and gamma chains.

Its subcellular location is the postsynaptic cell membrane. The protein resides in the cell membrane. The enzyme catalyses K(+)(in) = K(+)(out). The catalysed reaction is Na(+)(in) = Na(+)(out). After binding acetylcholine, the AChR responds by an extensive change in conformation that affects all subunits and leads to opening of an ion-conducting channel across the plasma membrane. The sequence is that of Acetylcholine receptor subunit gamma (CHRNG) from Gallus gallus (Chicken).